A 569-amino-acid chain; its full sequence is GATOR1 complex protein NPRL3 (569 aa).

Disordered stretches follow at residues 27-60 (PFQR…EQDG) and 416-477 (PSEE…GDSP). Polar residues-rich tracts occupy residues 34–52 (HPAS…SNTG) and 438–468 (SLST…NSSA). S476 carries the phosphoserine modification.

Belongs to the NPR3 family. As to quaternary structure, within the GATOR complex, component of the GATOR1 subcomplex, made of DEPDC5, NPRL2 and NPRL3. GATOR1 mediates the strong interaction of the GATOR complex with small GTPases Rag (RagA/RRAGA, RagB/RRAGB, RagC/RRAGC and/or RagD/RRAGD) heterodimers. GATOR1 interacts with GPR155/LYCHOS; interaction takes place in presence of cholesterol and prevents interaction between GATOR1 and KICSTOR. In terms of tissue distribution, widely expressed. Expressed in the frontal lobe cortex as well as in the temporal, parietal, and occipital lobes.

The protein localises to the lysosome membrane. As a component of the GATOR1 complex functions as an inhibitor of the amino acid-sensing branch of the mTORC1 pathway. In response to amino acid depletion, the GATOR1 complex has GTPase activating protein (GAP) activity and strongly increases GTP hydrolysis by RagA/RRAGA (or RagB/RRAGB) within heterodimeric Rag complexes, thereby turning them into their inactive GDP-bound form, releasing mTORC1 from lysosomal surface and inhibiting mTORC1 signaling. In the presence of abundant amino acids, the GATOR1 complex is negatively regulated by GATOR2, the other GATOR subcomplex, in this amino acid-sensing branch of the TORC1 pathway. The sequence is that of GATOR1 complex protein NPRL3 from Homo sapiens (Human).